We begin with the raw amino-acid sequence, 482 residues long: E1B 55 kDa protein (482 aa).

The tract at residues 73 to 94 (VLDSGEGPSCADDRDKQEKKES) is disordered. Residues 83–94 (ADDRDKQEKKES) show a composition bias toward basic and acidic residues. A phosphoserine mark is found at Ser476 and Ser477.

The protein belongs to the adenoviridae E1B 55 kDa protein family. As to quaternary structure, interacts with host PML-4 and PML-5; this interaction promotes efficient subnuclear targeting of E1B-55K to PML nuclear bodies. Interacts with E4-ORF3 protein. Interacts with E4-ORF6 protein.

Its subcellular location is the host nucleus. It is found in the host cytoplasm. Plays a major role to prevent cellular inhibition of viral genome replication. Assembles an SCF-like E3 ubiquitin ligase complex based on the cellular proteins ELOB, ELOC, CUL5 and RBX1, in cooperation with viral E4orf6. This viral RING-type ligase ubiquitinates cellular substrates and targets them to proteasomal degradation: TP53/p53, LIG4, MRE11-RAD50-NBS1 (MRN) complex, ITGA3, DAXX and BLM. E1B-55K probably acts as the substrate-specific adapter of the SCF-like E3 ubiquitin ligase complex. Degradation of host TP53/p53 activity is essential for preventing E1A-induced TP53 accumulation that would otherwise lead to cell apoptosis and growth arrest. E1B-55K also inactivates TP53 transcription-factor activity by binding its transactivation domain. E1B-55K also functions as a SUMO1 E3 ligase for TP53 which causes the latter to be sequestered in promyelocytic leukemia (PML) nuclear bodies thereby contributing to maximal inhibition of TP53 function. The polypeptide is E1B 55 kDa protein (Homo sapiens (Human)).